We begin with the raw amino-acid sequence, 483 residues long: Essential nuclear protein 1 (483 aa).

Disordered stretches follow at residues Met1–Leu21, Lys33–Asp55, Lys67–Tyr123, and Glu171–Ser200. Residues Tyr96–Tyr123 show a composition bias toward acidic residues. The residue at position 172 (Ser172) is a Phosphoserine; by ATM or ATR. Acidic residues predominate over residues Val174–Leu183. The span at Asn185–Leu198 shows a compositional bias: polar residues. A phosphoserine mark is found at Ser190 and Ser404.

It belongs to the bystin family.

The protein resides in the cytoplasm. The protein localises to the nucleus. It localises to the nucleolus. Functionally, required for normal export of the pre-40S particles from the nucleus to the cytoplasm. Its subcellular location and association with pre-40S subunit shifts from mixed cytoplasm/nucleus to all nuclear in RPS19 disruptions, suggesting it acts after the ribosomal protein. This chain is Essential nuclear protein 1 (ENP1), found in Saccharomyces cerevisiae (strain ATCC 204508 / S288c) (Baker's yeast).